The sequence spans 143 residues: Large ribosomal subunit protein uL11 (143 aa).

It belongs to the universal ribosomal protein uL11 family. In terms of assembly, part of the ribosomal stalk of the 50S ribosomal subunit. Interacts with L10 and the large rRNA to form the base of the stalk. L10 forms an elongated spine to which 2 L12 dimers bind in a sequential fashion forming a pentameric L10(L12)2(L12)2 complex. One or more lysine residues are methylated.

Functionally, forms part of the ribosomal stalk which helps the ribosome interact with GTP-bound translation factors. In Agrobacterium fabrum (strain C58 / ATCC 33970) (Agrobacterium tumefaciens (strain C58)), this protein is Large ribosomal subunit protein uL11.